The following is a 573-amino-acid chain: Dihydroxy-acid dehydratase (573 aa).

A compositionally biased stretch (basic and acidic residues) spans 1 to 14 (MTEKSPKPHKRSDA). Positions 1 to 21 (MTEKSPKPHKRSDAITEGPNR) are disordered. [2Fe-2S] cluster is bound at residue C55. D87 contributes to the Mg(2+) binding site. C128 lines the [2Fe-2S] cluster pocket. 2 residues coordinate Mg(2+): D129 and K130. K130 bears the N6-carboxylysine mark. C200 is a [2Fe-2S] cluster binding site. E450 contacts Mg(2+). Residue S476 is the Proton acceptor of the active site.

It belongs to the IlvD/Edd family. In terms of assembly, homodimer. It depends on [2Fe-2S] cluster as a cofactor. Mg(2+) serves as cofactor.

The catalysed reaction is (2R)-2,3-dihydroxy-3-methylbutanoate = 3-methyl-2-oxobutanoate + H2O. It catalyses the reaction (2R,3R)-2,3-dihydroxy-3-methylpentanoate = (S)-3-methyl-2-oxopentanoate + H2O. Its pathway is amino-acid biosynthesis; L-isoleucine biosynthesis; L-isoleucine from 2-oxobutanoate: step 3/4. It functions in the pathway amino-acid biosynthesis; L-valine biosynthesis; L-valine from pyruvate: step 3/4. In terms of biological role, functions in the biosynthesis of branched-chain amino acids. Catalyzes the dehydration of (2R,3R)-2,3-dihydroxy-3-methylpentanoate (2,3-dihydroxy-3-methylvalerate) into 2-oxo-3-methylpentanoate (2-oxo-3-methylvalerate) and of (2R)-2,3-dihydroxy-3-methylbutanoate (2,3-dihydroxyisovalerate) into 2-oxo-3-methylbutanoate (2-oxoisovalerate), the penultimate precursor to L-isoleucine and L-valine, respectively. The polypeptide is Dihydroxy-acid dehydratase (Koribacter versatilis (strain Ellin345)).